The sequence spans 187 residues: Large ribosomal subunit protein uL22 (187 aa).

Basic and acidic residues-rich tracts occupy residues 158 to 168 (TKATDESEQAK) and 178 to 187 (RQKEKMMRNE). A disordered region spans residues 158 to 187 (TKATDESEQAKKKLSKKKLQRQKEKMMRNE).

Belongs to the universal ribosomal protein uL22 family.

The chain is Large ribosomal subunit protein uL22 (RpL17) from Anopheles gambiae (African malaria mosquito).